The sequence spans 146 residues: PTS system fructose-specific EIIA component (146 aa).

The 124-residue stretch at 1 to 124 folds into the PTS EIIA type-4 domain; sequence MISVIISGHG…NLKAMSQQSF (124 aa). Histidine 9 acts as the Tele-phosphohistidine intermediate in catalysis. Histidine 9 bears the Phosphohistidine; by HPr mark.

It is found in the cytoplasm. Functionally, the phosphoenolpyruvate-dependent sugar phosphotransferase system (sugar PTS), a major carbohydrate active transport system, catalyzes the phosphorylation of incoming sugar substrates concomitantly with their translocation across the cell membrane. The enzyme II LevDE PTS system is involved in fructose transport. LevD and LevE act as negative regulators of the levanase operon. They may be involved in a PTS-mediated phosphorylation of a regulator. The protein is PTS system fructose-specific EIIA component of Bacillus subtilis (strain 168).